The chain runs to 901 residues: Protein translocase subunit SecA (901 aa).

Residues Gln85, 103-107, and Asp492 contribute to the ATP site; that span reads GEGKT. The interval 828–901 is disordered; the sequence is GLVTDDGGNP…PKNRRNKKRR (74 aa). Basic and acidic residues predominate over residues 871–881; sequence DGQKPRGEGNR. Over residues 882-901 the composition is skewed to basic residues; sequence AARRSAASKKPKNRRNKKRR.

The protein belongs to the SecA family. Monomer and homodimer. Part of the essential Sec protein translocation apparatus which comprises SecA, SecYEG and auxiliary proteins SecDF. Other proteins may also be involved.

Its subcellular location is the cell membrane. The protein resides in the cytoplasm. It catalyses the reaction ATP + H2O + cellular proteinSide 1 = ADP + phosphate + cellular proteinSide 2.. Functionally, part of the Sec protein translocase complex. Interacts with the SecYEG preprotein conducting channel. Has a central role in coupling the hydrolysis of ATP to the transfer of proteins into and across the cell membrane, serving as an ATP-driven molecular motor driving the stepwise translocation of polypeptide chains across the membrane. The protein is Protein translocase subunit SecA of Cutibacterium acnes (strain DSM 16379 / KPA171202) (Propionibacterium acnes).